Here is a 249-residue protein sequence, read N- to C-terminus: ATP synthase subunit a (249 aa).

6 consecutive transmembrane segments (helical) span residues 30 to 50 (QSPV…YVGM), 86 to 106 (FFPF…LGLL), 115 to 135 (HIAV…IVSL), 142 to 162 (FFAH…LVPI), 191 to 211 (MFAA…VLAV), and 218 to 238 (VALM…FAIL).

It belongs to the ATPase A chain family. In terms of assembly, F-type ATPases have 2 components, CF(1) - the catalytic core - and CF(0) - the membrane proton channel. CF(1) has five subunits: alpha(3), beta(3), gamma(1), delta(1), epsilon(1). CF(0) has three main subunits: a(1), b(2) and c(9-12). The alpha and beta chains form an alternating ring which encloses part of the gamma chain. CF(1) is attached to CF(0) by a central stalk formed by the gamma and epsilon chains, while a peripheral stalk is formed by the delta and b chains.

It localises to the cell inner membrane. Functionally, key component of the proton channel; it plays a direct role in the translocation of protons across the membrane. The chain is ATP synthase subunit a from Gluconacetobacter diazotrophicus (strain ATCC 49037 / DSM 5601 / CCUG 37298 / CIP 103539 / LMG 7603 / PAl5).